We begin with the raw amino-acid sequence, 307 residues long: Small ribosomal subunit protein uS3 (307 aa).

The KH type-2 domain maps to 17–86 (MDEYFAEQLN…NPQIDAQEVK (70 aa)). Positions 201-226 (IEEPAEKPAEKQVEKPAVAPKKEAAK) are enriched in basic and acidic residues. Residues 201–265 (IEEPAEKPAE…QVEASEDFEE (65 aa)) are disordered. Acidic residues predominate over residues 240–265 (PTEEPEVAEPEEAEEAQVEASEDFEE).

This sequence belongs to the universal ribosomal protein uS3 family. Part of the 30S ribosomal subunit.

Functionally, binds the lower part of the 30S subunit head. This chain is Small ribosomal subunit protein uS3, found in Methanosarcina mazei (strain ATCC BAA-159 / DSM 3647 / Goe1 / Go1 / JCM 11833 / OCM 88) (Methanosarcina frisia).